We begin with the raw amino-acid sequence, 370 residues long: Molybdenum import ATP-binding protein ModC (370 aa).

The ABC transporter domain occupies 2 to 233 (SVRVDIGHRL…LDLLPAEERG (232 aa)). 31–38 (GPSGSGKT) provides a ligand contact to ATP. The region spanning 293-359 (GLSALNILPG…VKTVSFDRAN (67 aa)) is the Mop domain.

This sequence belongs to the ABC transporter superfamily. Molybdate importer (TC 3.A.1.8) family. As to quaternary structure, the complex is composed of two ATP-binding proteins (ModC), two transmembrane proteins (ModB) and a solute-binding protein (ModA).

The protein localises to the cell inner membrane. It carries out the reaction molybdate(out) + ATP + H2O = molybdate(in) + ADP + phosphate + H(+). Part of the ABC transporter complex ModABC involved in molybdenum import. Responsible for energy coupling to the transport system. The protein is Molybdenum import ATP-binding protein ModC of Mesorhizobium japonicum (strain LMG 29417 / CECT 9101 / MAFF 303099) (Mesorhizobium loti (strain MAFF 303099)).